The sequence spans 424 residues: Serine hydroxymethyltransferase 2 (424 aa).

(6S)-5,6,7,8-tetrahydrofolate-binding positions include L125 and 129–131; that span reads GHL. Position 234 is an N6-(pyridoxal phosphate)lysine (K234). Residue E250 participates in (6S)-5,6,7,8-tetrahydrofolate binding.

This sequence belongs to the SHMT family. As to quaternary structure, homodimer. The cofactor is pyridoxal 5'-phosphate.

Its subcellular location is the cytoplasm. The catalysed reaction is (6R)-5,10-methylene-5,6,7,8-tetrahydrofolate + glycine + H2O = (6S)-5,6,7,8-tetrahydrofolate + L-serine. Its pathway is one-carbon metabolism; tetrahydrofolate interconversion. It participates in amino-acid biosynthesis; glycine biosynthesis; glycine from L-serine: step 1/1. Catalyzes the reversible interconversion of serine and glycine with tetrahydrofolate (THF) serving as the one-carbon carrier. This reaction serves as the major source of one-carbon groups required for the biosynthesis of purines, thymidylate, methionine, and other important biomolecules. Also exhibits THF-independent aldolase activity toward beta-hydroxyamino acids, producing glycine and aldehydes, via a retro-aldol mechanism. This chain is Serine hydroxymethyltransferase 2, found in Burkholderia mallei (strain ATCC 23344).